Consider the following 570-residue polypeptide: MSKNPPDLSGGEVKAKQIRFDSDARSALQEGVDQMAEAVKVTLGPKGRNVVLEKSFGAPTITKDGVTVAKEIELEERLPNIGAQVLKEAASKTNDDAGDGTTTATVLAQSVINAGMKSVTSGANPMDVKRGITAAAEEVVTHLRNQSDPVEGKDRISQVATISANNDDAIGDLIADAFERVGQDGVITVEEARGIETYLDVVEGMQFDRGYLSPYFVTDSEEMEAVLEDAYILIYDDEVGNMQDLLPILEKVSQTSNPLLIIAEDVEGEALATLVVNKMRGTLKVSAVKAPGFGDRRQSMLEDIAVLTGGTVISEEKGYRLENATLDYLGQADRVTIDQDNTTIVGGEGSEEEIEARVNQIRQQIANSTSDYDQEKLQERLAKLAGGVAVLNVGAATEPEMKAQKALVEDALSATRAAVDEGVLPGGGVAYLRALESIEEVEVENEDQEIGVSIVREALEAPLRQIAENTGHEGSIVVQKVKDGEGDFGFNARTEEYGDLLDQGVLDPTKVTRSALENAASVGGMLLTTEAVIADLEDEDDDDGGGGGGGGMPAGGAGGMGGMGGMGGMM.

ATP is bound by residues 42–45 (TLGP), Lys-63, 99–103 (DGTTT), Gly-427, and Asp-507. Positions 537–570 (EDEDDDDGGGGGGGGMPAGGAGGMGGMGGMGGMM) are disordered. A compositionally biased stretch (gly residues) spans 545–570 (GGGGGGGMPAGGAGGMGGMGGMGGMM).

The protein belongs to the chaperonin (HSP60) family. In terms of assembly, forms a cylinder of 14 subunits composed of two heptameric rings stacked back-to-back. Interacts with the co-chaperonin GroES.

The protein localises to the cytoplasm. It catalyses the reaction ATP + H2O + a folded polypeptide = ADP + phosphate + an unfolded polypeptide.. Its function is as follows. Together with its co-chaperonin GroES, plays an essential role in assisting protein folding. The GroEL-GroES system forms a nano-cage that allows encapsulation of the non-native substrate proteins and provides a physical environment optimized to promote and accelerate protein folding. The polypeptide is Chaperonin GroEL 1 (Salinibacter ruber (strain DSM 13855 / M31)).